The chain runs to 445 residues: Fatty acid desaturase 3 (445 aa).

The segment at 1–21 (MGGVGEPGPREGPAQPGAPLP) is disordered. Residues 1-133 (MGGVGEPGPR…DMKLFDASPT (133 aa)) lie on the Cytoplasmic side of the membrane. The Cytochrome b5 heme-binding domain maps to 20–97 (LPTFCWEQIR…LQPLLIGELA (78 aa)). A helical membrane pass occupies residues 134-154 (FFAFLLGHILAMEVLAWLLIY). At 155–159 (LLGPG) the chain is on the lumenal side. The helical transmembrane segment at 160–180 (WVPSALAAFILAISQAQSWCL) threads the bilayer. At 181-263 (QHDLGHASIF…KRRYLPYNQQ (83 aa)) the chain is on the cytoplasmic side. Residues 182-186 (HDLGH) carry the Histidine box-1 motif. A Histidine box-2 motif is present at residues 219–223 (HFQHH). A helical membrane pass occupies residues 264 to 284 (HLYFFLIGPPLLTLVNFEVEN). At 285–306 (LAYMLVCMQWADLLWAASFYAR) the chain is on the lumenal side. The chain crosses the membrane as a helical span at residues 307-327 (FFLSYLPFYGVPGVLLFFVAV). The Cytoplasmic segment spans residues 328 to 445 (RVLESHWFVW…DIWLDAYLHQ (118 aa)). Residues 383-387 (QIEHH) carry the Histidine box-3 motif.

It belongs to the fatty acid desaturase type 1 family. As to expression, highly expressed in various organs and tissues including liver, kidney, brain, lung, pancreas, testis, ovary and skeletal muscle (at protein level).

The protein localises to the endoplasmic reticulum membrane. It catalyses the reaction an N-acylsphing-4-enine + 2 Fe(II)-[cytochrome b5] + O2 + 2 H(+) = an N-acyl-sphinga-4E,14Z-dienine + 2 Fe(III)-[cytochrome b5] + 2 H2O. It carries out the reaction N-(hexanoyl)sphing-4-enine + 2 Fe(II)-[cytochrome b5] + O2 + 2 H(+) = N-hexanoyl-sphinga-4E,14Z-dienine + 2 Fe(III)-[cytochrome b5] + 2 H2O. The catalysed reaction is sphing-4-enine + 2 Fe(II)-[cytochrome b5] + O2 + 2 H(+) = sphinga-4E,14Z-dienine + 2 Fe(III)-[cytochrome b5] + 2 H2O. The enzyme catalyses (11E)-octadecenoyl-CoA + 2 Fe(II)-[cytochrome b5] + O2 + 2 H(+) = (11E,13Z)-octadecadienoyl-CoA + 2 Fe(III)-[cytochrome b5] + 2 H2O. It catalyses the reaction N-acyl-1-deoxysphinganine + 2 Fe(II)-[cytochrome b5] + O2 + 2 H(+) = N-acyl-1-deoxysphing-14Z-enine + 2 Fe(III)-[cytochrome b5] + 2 H2O. It carries out the reaction an N-acylsphinganine + 2 Fe(II)-[cytochrome b5] + O2 + 2 H(+) = an N-acylsphing-14Z-enine + 2 Fe(III)-[cytochrome b5] + 2 H2O. It participates in lipid metabolism; sphingolipid metabolism. Its pathway is lipid metabolism; polyunsaturated fatty acid biosynthesis. Functionally, mammals have different sphingoid bases that differ in their length and/or pattern of desaturation and hydroxyl groups. The predominant sphingoid base that comprises mammalian ceramides is sphing-4-enine (sphingosine or SPH) which has a trans (E) desaturation at carbon 4. FADS3 is a desaturase that introduces a cis (Z) double bond between carbon 14 and carbon 15 of the sphingoid base (also known as long chain base, LCB), producing LCBs such as sphinga-4,14-dienine (SPD, d18:2(4E,14Z)) from SPH. Prefers SPH-containing ceramides (N-acylsphing-4-enines) as substrates. Capable of metabolizing also the SPH in its free form. SPD ceramides occur widely in mammalian tissues and cells. Due to their unusual structure containing a cis double bond, SPD ceramides may have an opposite, negative role in lipid microdomain formation relative to conventional ceramides. Could be involved in the detoxification of 1-deoxy sphingolipids, by desaturating the cytotoxic 1-deoxysphinganine (1-deoxySA, m18:0), produced under pathological conditions, to 1-deoxysphingenine (1-deoxysphingosine, 1-deoxySO, m18:1). Although prefers SPH-containing ceramides (N-acylsphing-4-enines) as substrates, it also exhibits activity toward dihydrosphingosine-containing CERs (N-acylsphinganines) and produces 14Z-SPH-containing sphingolipids,which can be found in patients with DEGS1 mutations. Its desaturase mechanism involves an electron transfer facilitated by cytochrome b5. FADS3 also acts as a methyl-end fatty acyl coenzyme A (CoA) desaturase that introduces a cis double bond between the preexisting double bond and the terminal methyl group of the fatty acyl chain. Desaturates (11E)-octadecenoate (trans-vaccenoate, the predominant trans fatty acid in human milk) at carbon 13 to generate (11E,13Z)-octadecadienoate (also known as conjugated linoleic acid 11E,13Z-CLA). This Homo sapiens (Human) protein is Fatty acid desaturase 3.